A 253-amino-acid chain; its full sequence is Endonuclease NucS (253 aa).

Belongs to the NucS endonuclease family.

It localises to the cytoplasm. In terms of biological role, cleaves both 3' and 5' ssDNA extremities of branched DNA structures. In Pyrococcus horikoshii (strain ATCC 700860 / DSM 12428 / JCM 9974 / NBRC 100139 / OT-3), this protein is Endonuclease NucS.